Consider the following 113-residue polypeptide: Outer membrane protein assembly factor BamE (113 aa).

The first 19 residues, 1–19 (MRCKTLTAAAAVLLMLTAG), serve as a signal peptide directing secretion. Cysteine 20 is lipidated: N-palmitoyl cysteine. A lipid anchor (S-diacylglycerol cysteine) is attached at cysteine 20.

It belongs to the BamE family. Part of the Bam complex, which is composed of the outer membrane protein BamA, and four lipoproteins BamB, BamC, BamD and BamE.

It is found in the cell outer membrane. Part of the outer membrane protein assembly complex, which is involved in assembly and insertion of beta-barrel proteins into the outer membrane. This is Outer membrane protein assembly factor BamE from Escherichia coli O6:H1 (strain CFT073 / ATCC 700928 / UPEC).